The chain runs to 183 residues: Bifunctional protein PyrR (183 aa).

Positions 102 to 114 (VVLVDDVLFSGRT) match the PRPP-binding motif.

It belongs to the purine/pyrimidine phosphoribosyltransferase family. PyrR subfamily.

It carries out the reaction UMP + diphosphate = 5-phospho-alpha-D-ribose 1-diphosphate + uracil. Its function is as follows. Regulates the transcription of the pyrimidine nucleotide (pyr) operon in response to exogenous pyrimidines. Functionally, also displays a weak uracil phosphoribosyltransferase activity which is not physiologically significant. This Leifsonia xyli subsp. xyli (strain CTCB07) protein is Bifunctional protein PyrR.